A 925-amino-acid chain; its full sequence is Proto-oncogene DBL (925 aa).

One can recognise a CRAL-TRIO domain in the interval 1 to 88 (MAEANPRRGK…ELGGTLQYCH (88 aa)). Residues 221 to 322 (WKFEQDFQQL…EIKAKRIQLS (102 aa)) form a Spectrin repeat. Residues 495 to 675 (LKNHVLNELI…LDLLKSVNDS (181 aa)) enclose the DH domain. The PH domain maps to 687–809 (NLNELGKMIM…WLKEIRNILL (123 aa)).

It belongs to the MCF2 family. Interacts with an array of inositol phospholipids such as phosphatidylinositol 3-phosphate (PI3P), phosphatidylinositol 4-phosphate (PI4P) and phosphatidylinositol 5-phosphate (PI5P). May interact with CCPG1. Phosphorylation by TNK2 enhances guanine nucleotide exchange factor (GEF) activity toward Rho family proteins. Isoform 1 is expressed only in brain. Isoform 3 is expressed in heart, kidney, spleen, liver and testis. Isoform 4 is expressed in brain, heart, kidney, testis, placenta, stomach and peripheral blood. The protein is detectable in brain, heart, kidney, intestine, muscle, lung and testis.

Its subcellular location is the cytoplasm. It localises to the membrane. Its function is as follows. Guanine nucleotide exchange factor (GEF) that modulates the Rho family of GTPases. Promotes the conversion of some member of the Rho family GTPase from the GDP-bound to the GTP-bound form. Isoform 1 exhibits no activity toward RHOA, RAC1 or CDC42. Isoform 2 exhibits decreased GEF activity toward CDC42. Isoform 3 exhibits a weak but significant activity toward RAC1 and CDC42. Isoform 4 exhibits significant activity toward RHOA and CDC42. The truncated DBL oncogene is active toward RHOA, RAC1 and CDC42. This Homo sapiens (Human) protein is Proto-oncogene DBL (MCF2).